The primary structure comprises 557 residues: MKNVDNYRRGYFMPPVKSLKWAEKEYITTPPTWCSVDLRDGNQALVVPMSLEEKLEYYHMLLKIGFKEIEVGFPAASETEYAFLRTLIEQNLIPEDVTIQVLTQSRDHIIEKTFKALVGVKKAVVHLYNSTSVAQREQVFKMSREEIVEIAVSGARLLKKYAAETEGNFQFEYSPESFTGTEMEFALEICNQVLDVFEPTPENKVIINLPATVSLSMPHVYASQIEYMSEHLKYRDNVILSLHPHNDRGTAVADAELGLLAGGQRIEGTLFGNGERTGNVDIVTLALNLFSHGVDPGLNFASMLEITAKYEALTRMKVHDRQPYGGKLVFAAFSGSHQDAITKGIKWREEHECHYWNVPYLLIDPQDIGREYEGDVIRINSQSGKGGIAYMLEQHYALDLPAKMREAFGYKVKNVSDNLHKELMPEEIKDIFFKEYVNIENPIKFLNFHFLNHDDFQTTVTLEFKGEIQELSGEGDGRLDAISNALQARLGLSYSNLIYKEHALELGSKSQAVSYVGVTGPDGVIHWGCGIHTDIFTSSVKALISAINTMIKDSAAV.

One can recognise a Pyruvate carboxyltransferase domain in the interval 31 to 304; the sequence is PTWCSVDLRD…DPGLNFASML (274 aa). Mg(2+) contacts are provided by Asp40, His243, His245, and Asn279. Positions 439 to 557 are regulatory domain; sequence IENPIKFLNF…NTMIKDSAAV (119 aa).

Belongs to the alpha-IPM synthase/homocitrate synthase family. LeuA type 2 subfamily. Homodimer. Mg(2+) serves as cofactor.

The protein resides in the cytoplasm. The enzyme catalyses 3-methyl-2-oxobutanoate + acetyl-CoA + H2O = (2S)-2-isopropylmalate + CoA + H(+). The protein operates within amino-acid biosynthesis; L-leucine biosynthesis; L-leucine from 3-methyl-2-oxobutanoate: step 1/4. Catalyzes the condensation of the acetyl group of acetyl-CoA with 3-methyl-2-oxobutanoate (2-ketoisovalerate) to form 3-carboxy-3-hydroxy-4-methylpentanoate (2-isopropylmalate). The sequence is that of 2-isopropylmalate synthase from Desulfitobacterium hafniense (strain Y51).